Here is a 217-residue protein sequence, read N- to C-terminus: Protein-L-isoaspartate O-methyltransferase (217 aa).

Residue Ser67 is part of the active site.

The protein belongs to the methyltransferase superfamily. L-isoaspartyl/D-aspartyl protein methyltransferase family.

The protein resides in the cytoplasm. The enzyme catalyses [protein]-L-isoaspartate + S-adenosyl-L-methionine = [protein]-L-isoaspartate alpha-methyl ester + S-adenosyl-L-homocysteine. Catalyzes the methyl esterification of L-isoaspartyl residues in peptides and proteins that result from spontaneous decomposition of normal L-aspartyl and L-asparaginyl residues. It plays a role in the repair and/or degradation of damaged proteins. This chain is Protein-L-isoaspartate O-methyltransferase, found in Azoarcus sp. (strain BH72).